Here is a 542-residue protein sequence, read N- to C-terminus: Probable myosin-binding protein 6 (542 aa).

The first 21 residues, 1 to 21 (MYIQLLCFFLFLFLLLQATMS), serve as a signal peptide directing secretion. Residues 39-59 (FLIYTVLEWSLIVFLFIDGVI) form a helical membrane-spanning segment. The segment at 219–239 (SFLAPAPSPRVSHNKLSENES) is disordered. In terms of domain architecture, GTD-binding spans 300 to 398 (SILNQLKKEV…ELEAEFEVYR (99 aa)). Residues 419–480 (GNASAYDDCQ…DEEKGSESKE (62 aa)) form a disordered region. Residues 437 to 456 (AVSSSNQQENGENIDQNGQS) show a composition bias toward polar residues. Basic and acidic residues predominate over residues 471 to 480 (DEEKGSESKE).

The protein localises to the membrane. In terms of biological role, probable membrane-anchored myosin receptors. The sequence is that of Probable myosin-binding protein 6 from Arabidopsis thaliana (Mouse-ear cress).